The primary structure comprises 158 residues: Phosphopantetheine adenylyltransferase (158 aa).

Thr-10 provides a ligand contact to substrate. ATP is bound by residues 10–11 (TF) and His-18. Residues Lys-42, Leu-74, and Arg-88 each coordinate substrate. Residues 89 to 91 (GLR), Glu-99, and 124 to 130 (NSFISST) each bind ATP.

This sequence belongs to the bacterial CoaD family. As to quaternary structure, homohexamer. The cofactor is Mg(2+).

Its subcellular location is the cytoplasm. The enzyme catalyses (R)-4'-phosphopantetheine + ATP + H(+) = 3'-dephospho-CoA + diphosphate. Its pathway is cofactor biosynthesis; coenzyme A biosynthesis; CoA from (R)-pantothenate: step 4/5. Its function is as follows. Reversibly transfers an adenylyl group from ATP to 4'-phosphopantetheine, yielding dephospho-CoA (dPCoA) and pyrophosphate. The sequence is that of Phosphopantetheine adenylyltransferase from Shewanella loihica (strain ATCC BAA-1088 / PV-4).